A 190-amino-acid chain; its full sequence is dTTP/UTP pyrophosphatase (190 aa).

The active-site Proton acceptor is Asp-68.

Belongs to the Maf family. YhdE subfamily. Requires a divalent metal cation as cofactor.

Its subcellular location is the cytoplasm. It carries out the reaction dTTP + H2O = dTMP + diphosphate + H(+). The enzyme catalyses UTP + H2O = UMP + diphosphate + H(+). Functionally, nucleoside triphosphate pyrophosphatase that hydrolyzes dTTP and UTP. May have a dual role in cell division arrest and in preventing the incorporation of modified nucleotides into cellular nucleic acids. In Pyrococcus furiosus (strain ATCC 43587 / DSM 3638 / JCM 8422 / Vc1), this protein is dTTP/UTP pyrophosphatase.